Here is an 830-residue protein sequence, read N- to C-terminus: Serine/threonine-protein kinase atg1 (830 aa).

Residues 14-307 form the Protein kinase domain; it reads YVIRSEIGRG…YDGFFSSIVV (294 aa). Residues 20 to 28 and Lys-43 contribute to the ATP site; that span reads IGRGSFAIV. Catalysis depends on Asp-157, which acts as the Proton acceptor. Ser-346 is modified (phosphoserine). The segment covering 448 to 468 has biased composition (polar residues); the sequence is TQLSNESLTHEQSINGNSPSP. The tract at residues 448 to 480 is disordered; it reads TQLSNESLTHEQSINGNSPSPNEGVFQGSFSPE.

Belongs to the protein kinase superfamily. Ser/Thr protein kinase family. APG1/unc-51/ULK1 subfamily. As to quaternary structure, homodimer. Component of the atg1 kinase complex composed of at least atg1, atg13, atg17 and atg101. Interacts directly with atg13. In terms of processing, phosphorylated. Dephosphorylated under depletion of nitrogen.

It catalyses the reaction L-seryl-[protein] + ATP = O-phospho-L-seryl-[protein] + ADP + H(+). It carries out the reaction L-threonyl-[protein] + ATP = O-phospho-L-threonyl-[protein] + ADP + H(+). Its function is as follows. Serine/threonine protein kinase involved in the cytoplasm to vacuole transport (Cvt) and found to be essential in autophagy, where it is required for the formation of autophagosomes. Involved in the clearance of protein aggregates which cannot be efficiently cleared by the proteasome. Required for selective autophagic degradation of the nucleus (nucleophagy) as well as for mitophagy which contributes to regulate mitochondrial quantity and quality by eliminating the mitochondria to a basal level to fulfill cellular energy requirements and preventing excess ROS production. Also involved in endoplasmic reticulum-specific autophagic process, in selective removal of ER-associated degradation (ERAD) substrates. Plays a key role in ATG9 and ATG23 cycling through the pre-autophagosomal structure and is necessary to promote ATG18 binding to ATG9 through phosphorylation of ATG9. Catalyzes phosphorylation of ATG4, decreasing the interaction between ATG4 and ATG8 and impairing deconjugation of PE-conjugated forms of ATG8. Autophagy functions to supply nitrogen and is activated when cells cannot access exogenous nitrogen, thus ensuring that they can adapt and subsequently propagate. Finally, atg13 is also required for glycogen storage during stationary phase and has a role in meiosis and sporulation. This is Serine/threonine-protein kinase atg1 from Schizosaccharomyces pombe (strain 972 / ATCC 24843) (Fission yeast).